A 295-amino-acid polypeptide reads, in one-letter code: Zinc finger CCCH domain-containing protein 44 (295 aa).

Positions Met1 to Val31 are disordered. 2 C3H1-type zinc fingers span residues Gly32–Pro60 and Ser98–Arg126. The 65-residue stretch at Ser166 to Val230 folds into the KH domain. The segment at Asn259–Ser286 adopts a C3H1-type 3 zinc-finger fold.

The sequence is that of Zinc finger CCCH domain-containing protein 44 from Oryza sativa subsp. japonica (Rice).